The chain runs to 673 residues: MINNWLAVGLLVVSGILAFNWKRKHPYGQTVEIGEKPENGGRIRRNSACADHLISFLEDDEIYTLYDSLVKSCKKYGERKCFGERKKDSNGNLGKFEWISYNTYLERCEYIQQGLCELGLKPKSKVGIFSKNRLEWLIVHSASFIQSYCVVSFYETLGVESLSYVTEHAEIGLAFCSAETLQKTLDIAKGVKVLKTIICFDSIDKEHYNIAKELGVTLYTYDEIMKKGKEANGKHKHTPPTPDTLSTIMYTSGTTGPPKGVMITHKNLTSVVCAVSDFIKVYDTDVHYSYLPYAHVLERVVILAAFHFGAAIGIFSGDISNILVEVKLLSPTLFIGVPRVFERIKTNVFKEISKKPALLRTLFNGAYNLKYLSIQHGFKLPIIEKVLDLVFFSKIKQALGGKVRVILSGSAPLSFDTEVFLRVVMCCCVLQGYGASEGCGGDACKRLDDESVGTIGPPFASNEIKLVDVPELGYDSNGEVQTGEVCLRGPSISSGYYKDEEKTREEFKDGWFHTGDIGRWNRDGSLSIVDRKKNIFKLSQGEYVAVEKIETIVVKSEYVEQVCIYGDSQKSCVIAIIHPHPESCSEWAGSKKTDKDIKEICKNQDFIKVVLDDIIKNCKKSGLHGFEIPKAIHLTPEAFSDQNNLLTPSFKLKRHEIKKYFEDEIKKLYSKLD.

The signal sequence occupies residues 1-18; it reads MINNWLAVGLLVVSGILA. An N-linked (GlcNAc...) asparagine glycan is attached at Asn-267.

This sequence belongs to the ATP-dependent AMP-binding enzyme family.

It localises to the endoplasmic reticulum. The catalysed reaction is a long-chain fatty acid + ATP + CoA = a long-chain fatty acyl-CoA + AMP + diphosphate. Its function is as follows. Long chain fatty acid acyl-CoA synthetases catalyze the formation of a thiester bond between a free fatty acid and coenzyme A during fatty acid metabolic process. The chain is Fatty acyl-CoA synthetase B (fcsB) from Dictyostelium discoideum (Social amoeba).